The following is a 213-amino-acid chain: Protein-L-isoaspartate O-methyltransferase (213 aa).

Residue Ser-64 is part of the active site.

Belongs to the methyltransferase superfamily. L-isoaspartyl/D-aspartyl protein methyltransferase family.

The protein localises to the cytoplasm. It catalyses the reaction [protein]-L-isoaspartate + S-adenosyl-L-methionine = [protein]-L-isoaspartate alpha-methyl ester + S-adenosyl-L-homocysteine. Functionally, catalyzes the methyl esterification of L-isoaspartyl residues in peptides and proteins that result from spontaneous decomposition of normal L-aspartyl and L-asparaginyl residues. It plays a role in the repair and/or degradation of damaged proteins. The protein is Protein-L-isoaspartate O-methyltransferase of Flavobacterium psychrophilum (strain ATCC 49511 / DSM 21280 / CIP 103535 / JIP02/86).